The chain runs to 160 residues: Sperm acrosome-associated protein 5 (160 aa).

Residues 1–21 (MKVCSIVVVILAVLLIAKLDA) form the signal peptide. The region spanning 22–150 (KIYERCELAK…SEWLKGCSVR (129 aa)) is the C-type lysozyme domain. 4 disulfides stabilise this stretch: cysteine 27–cysteine 147, cysteine 51–cysteine 135, cysteine 85–cysteine 100, and cysteine 96–cysteine 114. The active site involves glutamate 56.

This sequence belongs to the glycosyl hydrolase 22 family.

The protein resides in the secreted. The enzyme catalyses Hydrolysis of (1-&gt;4)-beta-linkages between N-acetylmuramic acid and N-acetyl-D-glucosamine residues in a peptidoglycan and between N-acetyl-D-glucosamine residues in chitodextrins.. The sequence is that of Sperm acrosome-associated protein 5 (Spaca5) from Mus musculus (Mouse).